We begin with the raw amino-acid sequence, 429 residues long: tRNA modification GTPase MnmE (429 aa).

Residues R20, E77, and R117 each coordinate (6S)-5-formyl-5,6,7,8-tetrahydrofolate. The TrmE-type G domain occupies 213–353 (GFEVAILGAP…LVKAVSHRLS (141 aa)). K(+) is bound at residue N223. GTP contacts are provided by residues 223–228 (NVGKSS), 242–248 (SSIAGTT), and 267–270 (DTAG). S227 contributes to the Mg(2+) binding site. K(+)-binding residues include S242, I244, and T247. T248 contributes to the Mg(2+) binding site. K429 is a (6S)-5-formyl-5,6,7,8-tetrahydrofolate binding site.

It belongs to the TRAFAC class TrmE-Era-EngA-EngB-Septin-like GTPase superfamily. TrmE GTPase family. In terms of assembly, homodimer. Heterotetramer of two MnmE and two MnmG subunits. The cofactor is K(+).

It localises to the cytoplasm. Functionally, exhibits a very high intrinsic GTPase hydrolysis rate. Involved in the addition of a carboxymethylaminomethyl (cmnm) group at the wobble position (U34) of certain tRNAs, forming tRNA-cmnm(5)s(2)U34. The chain is tRNA modification GTPase MnmE from Dinoroseobacter shibae (strain DSM 16493 / NCIMB 14021 / DFL 12).